Here is a 134-residue protein sequence, read N- to C-terminus: Thionin-2.1 (134 aa).

The first 24 residues, 1–24 (MKGRILILSLLIMSLVMAQVQVEA), serve as a signal peptide directing secretion. 3 disulfide bridges follow: Cys-27/Cys-61, Cys-28/Cys-55, and Cys-40/Cys-49. The propeptide at 68–134 (AILENSADAT…VVPPGPPKLL (67 aa)) is acidic domain.

It belongs to the plant thionin (TC 1.C.44) family. Detected in rosette leaves and at a very high level in flowers and in siliques.

Its subcellular location is the secreted. In terms of biological role, seems to function as a defense factor. Thionins are small plant proteins which are toxic to animal cells. They seem to exert their toxic effect at the level of the cell membrane. Their precise function is not known. This is Thionin-2.1 (THI2.1) from Arabidopsis thaliana (Mouse-ear cress).